Reading from the N-terminus, the 101-residue chain is Small ubiquitin-related modifier 1 (101 aa).

The 78-residue stretch at 20–97 (EYIKLKVIGQ…IEVYQEQTGG (78 aa)) folds into the Ubiquitin-like domain. Glycine 97 participates in a covalent cross-link: Glycyl lysine isopeptide (Gly-Lys) (interchain with K-? in acceptor proteins). A propeptide spanning residues 98–101 (HSTV) is cleaved from the precursor.

Belongs to the ubiquitin family. SUMO subfamily. As to quaternary structure, interacts with SAE2, UBE2I, RANBP2, PIAS1 and PIAS2. Covalently attached to a number of proteins. In terms of processing, cleavage of precursor form by a sentrin-specific protease is necessary for function.

The protein localises to the nucleus membrane. The protein resides in the nucleus speckle. It localises to the cytoplasm. It is found in the nucleus. Its subcellular location is the PML body. The protein localises to the cell membrane. In terms of biological role, ubiquitin-like protein that can be covalently attached to proteins as a monomer or a lysine-linked polymer. Covalent attachment via an isopeptide bond to its substrates requires prior activation by the E1 complex SAE1-SAE2 and linkage to the E2 enzyme UBE2I. This post-translational modification on lysine residues of proteins plays a crucial role in a number of cellular processes such as nuclear transport, DNA replication and repair, mitosis and signal transduction. Polymeric SUMO1 chains are also susceptible to polyubiquitination which functions as a signal for proteasomal degradation of modified proteins. This Gallus gallus (Chicken) protein is Small ubiquitin-related modifier 1 (SUMO1).